The sequence spans 137 residues: Type III secretion protein HrcQb (137 aa).

The span at 1 to 22 (MSTEDLYQDDVESLEDYDDETA) shows a compositional bias: acidic residues. The interval 1 to 67 (MSTEDLYQDD…EQQAPSGLDS (67 aa)) is disordered. The span at 23–33 (EQEHEHEHEQQ) shows a compositional bias: basic and acidic residues. Over residues 36–58 (EPDDESEYAEAEPDDDEQEEQEE) the composition is skewed to acidic residues.

The protein belongs to the FliN/MopA/SpaO family. As to quaternary structure, homotetramer. The four monomers assemble into two tightly bound homodimers. Interacts with HrcQa.

It localises to the cytoplasm. Component of the type III secretion system, which is required for effector protein delivery, parasitism, and pathogenicity. Probably participates in the formation of a C-ring-like assembly along with HrcQa. This is Type III secretion protein HrcQb (hrcQb) from Pseudomonas syringae pv. tomato (strain ATCC BAA-871 / DC3000).